Here is a 310-residue protein sequence, read N- to C-terminus: HPr kinase/phosphorylase 1 (310 aa).

Residues histidine 139 and lysine 160 contribute to the active site. Residue 154-161 participates in ATP binding; the sequence is GQSGVGKS. Serine 161 contributes to the Mg(2+) binding site. The active-site Proton acceptor; for phosphorylation activity. Proton donor; for dephosphorylation activity is aspartate 178. Positions 202 to 211 are important for the catalytic mechanism of both phosphorylation and dephosphorylation; that stretch reads LEIRGLGIIN. Glutamate 203 is a Mg(2+) binding site. Residue arginine 244 is part of the active site. Positions 265-270 are important for the catalytic mechanism of dephosphorylation; it reads PVRPGR.

The protein belongs to the HPrK/P family. As to quaternary structure, homohexamer. The cofactor is Mg(2+).

It carries out the reaction [HPr protein]-L-serine + ATP = [HPr protein]-O-phospho-L-serine + ADP + H(+). The enzyme catalyses [HPr protein]-O-phospho-L-serine + phosphate + H(+) = [HPr protein]-L-serine + diphosphate. Its function is as follows. Catalyzes the ATP- as well as the pyrophosphate-dependent phosphorylation of a specific serine residue in HPr, a phosphocarrier protein of the phosphoenolpyruvate-dependent sugar phosphotransferase system (PTS). HprK/P also catalyzes the pyrophosphate-producing, inorganic phosphate-dependent dephosphorylation (phosphorolysis) of seryl-phosphorylated HPr (P-Ser-HPr). The two antagonistic activities of HprK/P are regulated by several intracellular metabolites, which change their concentration in response to the absence or presence of rapidly metabolisable carbon sources (glucose, fructose, etc.) in the growth medium. Also phosphorylates/dephosphorylates the HPr-like catabolite repression protein crh on a specific serine residue. Therefore, by controlling the phosphorylation state of HPr and crh, HPrK/P is a sensor enzyme that plays a major role in the regulation of carbon metabolism and sugar transport: it mediates carbon catabolite repression (CCR), and regulates PTS-catalyzed carbohydrate uptake and inducer exclusion. This Oceanobacillus iheyensis (strain DSM 14371 / CIP 107618 / JCM 11309 / KCTC 3954 / HTE831) protein is HPr kinase/phosphorylase 1 (hprK1).